Here is a 155-residue protein sequence, read N- to C-terminus: Endoribonuclease YbeY (155 aa).

Zn(2+) contacts are provided by histidine 114, histidine 118, and histidine 124.

The protein belongs to the endoribonuclease YbeY family. Zn(2+) serves as cofactor.

It localises to the cytoplasm. Its function is as follows. Single strand-specific metallo-endoribonuclease involved in late-stage 70S ribosome quality control and in maturation of the 3' terminus of the 16S rRNA. This Escherichia coli O1:K1 / APEC protein is Endoribonuclease YbeY.